Consider the following 223-residue polypeptide: Killer cell lectin-like receptor subfamily B member 1A (223 aa).

Residues 1–43 are Cytoplasmic-facing; that stretch reads MDTARVYLSLKPSKTAAGAQCVSPPSLPPDACRCPRSHRLALK. The LCK-binding motif motif lies at 32-35; sequence CRCP. The helical; Signal-anchor for type II membrane protein transmembrane segment at 44-63 threads the bilayer; the sequence is LSCAGLILLVLALVGMSILV. Over 64-223 the chain is Extracellular; that stretch reads RVLVQKPSVE…LKCECMCNDS (160 aa). Positions 93–212 constitute a C-type lectin domain; that stretch reads KCPKDWLSHR…DSDNIWVCQK (120 aa). 3 disulfides stabilise this stretch: Cys-94/Cys-105, Cys-122/Cys-210, and Cys-189/Cys-202.

As to quaternary structure, homodimer; disulfide-linked. Interacts with tyrosine kinase LCK. In terms of tissue distribution, expressed in natural killer cells.

It localises to the membrane. Plays a stimulatory role on natural killer (NK) cell cytotoxicity. The polypeptide is Killer cell lectin-like receptor subfamily B member 1A (Klrb1a) (Rattus norvegicus (Rat)).